The following is a 502-amino-acid chain: Sulfate adenylyltransferase (502 aa).

An N-terminal region spans residues 1–167 (MPSPHGGVLQ…LEAIQLPVHY (167 aa)). The catalytic stretch occupies residues 168-393 (DYPGWRKTPA…LRESNPSRPK (226 aa)). Glutamine 195 lines the sulfate pocket. ATP contacts are provided by residues 195 to 198 (QTRN) and 289 to 292 (GRDH). Catalysis depends on residues threonine 196, arginine 197, and asparagine 198. Arginine 197 contributes to the sulfate binding site. Alanine 293 is a binding site for sulfate. Valine 331 contacts ATP. The interval 394–502 (QGFALVLSET…FLEDQGFFQF (109 aa)) is required for oligomerization; adenylyl-sulfate kinase-like.

This sequence belongs to the sulfate adenylyltransferase family. Homohexamer. Dimer of trimers.

The protein localises to the cytoplasm. The enzyme catalyses sulfate + ATP + H(+) = adenosine 5'-phosphosulfate + diphosphate. It functions in the pathway sulfur metabolism; hydrogen sulfide biosynthesis; sulfite from sulfate: step 1/3. Its function is as follows. Catalyzes the first intracellular reaction of sulfate assimilation, forming adenosine-5'-phosphosulfate (APS) from inorganic sulfate and ATP. Plays an important role in sulfate activation as a component of the biosynthesis pathway of sulfur-containing amino acids. The chain is Sulfate adenylyltransferase from Kluyveromyces lactis (strain ATCC 8585 / CBS 2359 / DSM 70799 / NBRC 1267 / NRRL Y-1140 / WM37) (Yeast).